A 517-amino-acid chain; its full sequence is GMP synthase [glutamine-hydrolyzing] (517 aa).

The 191-residue stretch at 9–199 folds into the Glutamine amidotransferase type-1 domain; the sequence is RILILDFGSQ…VLNVCGCEGL (191 aa). Cysteine 86 functions as the Nucleophile in the catalytic mechanism. Active-site residues include histidine 173 and glutamate 175. The region spanning 200-392 is the GMPS ATP-PPase domain; the sequence is WTSASIIEDA…LGLPYNMLYR (193 aa). Residue 227–233 participates in ATP binding; it reads SGGVDSS.

In terms of assembly, homodimer.

The enzyme catalyses XMP + L-glutamine + ATP + H2O = GMP + L-glutamate + AMP + diphosphate + 2 H(+). It participates in purine metabolism; GMP biosynthesis; GMP from XMP (L-Gln route): step 1/1. Its function is as follows. Catalyzes the synthesis of GMP from XMP. The polypeptide is GMP synthase [glutamine-hydrolyzing] (Aliivibrio salmonicida (strain LFI1238) (Vibrio salmonicida (strain LFI1238))).